Here is a 311-residue protein sequence, read N- to C-terminus: Putative S-adenosyl-L-methionine-dependent methyltransferase MRA_0152 (311 aa).

S-adenosyl-L-methionine-binding positions include aspartate 135 and 164 to 165 (DL).

It belongs to the UPF0677 family.

Its function is as follows. Exhibits S-adenosyl-L-methionine-dependent methyltransferase activity. In Mycobacterium tuberculosis (strain ATCC 25177 / H37Ra), this protein is Putative S-adenosyl-L-methionine-dependent methyltransferase MRA_0152.